The sequence spans 288 residues: MKSFCVKAPAKINLFLHVVEKKETGYHLIEGLFVFANLSNFLEIKVGEKDFRYDNPIVEFVNSELKISNKYNTVMRAVNLLLRHAPVRTKVTVKVVKNIPTSAGLGSGSSDAGAVIRTLGKLWKIDRPILNEIALSVGADVPASIDSKPVLVRGIGEELCYINKFSLPTNIVLAKPKKKFLSTPEVFSKYGGNFSKPIEWRDDTEKDLLKLLKETENDLQEIAISLVPEIRDVILALESQEGSILSRMSGSGVTCFGIFDSEENAKTAAVNIREKQPEWWVCDAQLIV.

Residue K11 is part of the active site. 100–110 serves as a coordination point for ATP; the sequence is PTSAGLGSGSS. Residue D140 is part of the active site.

Belongs to the GHMP kinase family. IspE subfamily.

It catalyses the reaction 4-CDP-2-C-methyl-D-erythritol + ATP = 4-CDP-2-C-methyl-D-erythritol 2-phosphate + ADP + H(+). Its pathway is isoprenoid biosynthesis; isopentenyl diphosphate biosynthesis via DXP pathway; isopentenyl diphosphate from 1-deoxy-D-xylulose 5-phosphate: step 3/6. In terms of biological role, catalyzes the phosphorylation of the position 2 hydroxy group of 4-diphosphocytidyl-2C-methyl-D-erythritol. The chain is 4-diphosphocytidyl-2-C-methyl-D-erythritol kinase from Wolbachia sp. subsp. Brugia malayi (strain TRS).